Here is a 220-residue protein sequence, read N- to C-terminus: UPF0319 protein YccT (220 aa).

Residues 1–20 form the signal peptide; it reads MKTGALTTFLALCLPVTVFA.

Belongs to the UPF0319 family.

The protein is UPF0319 protein YccT of Salmonella schwarzengrund (strain CVM19633).